Reading from the N-terminus, the 311-residue chain is Homoserine kinase (311 aa).

89-99 (PFARGLGSSAT) serves as a coordination point for ATP.

It belongs to the GHMP kinase family. Homoserine kinase subfamily.

It is found in the cytoplasm. It carries out the reaction L-homoserine + ATP = O-phospho-L-homoserine + ADP + H(+). The protein operates within amino-acid biosynthesis; L-threonine biosynthesis; L-threonine from L-aspartate: step 4/5. Catalyzes the ATP-dependent phosphorylation of L-homoserine to L-homoserine phosphate. In Halothermothrix orenii (strain H 168 / OCM 544 / DSM 9562), this protein is Homoserine kinase.